Reading from the N-terminus, the 324-residue chain is UDP-N-acetylenolpyruvoylglucosamine reductase (324 aa).

In terms of domain architecture, FAD-binding PCMH-type spans 36–203; the sequence is FRAGGLAELM…TSVLFEGYPE (168 aa). Residue Arg-183 is part of the active site. Ser-232 (proton donor) is an active-site residue. Glu-302 is a catalytic residue.

The protein belongs to the MurB family. Requires FAD as cofactor.

The protein localises to the cytoplasm. The enzyme catalyses UDP-N-acetyl-alpha-D-muramate + NADP(+) = UDP-N-acetyl-3-O-(1-carboxyvinyl)-alpha-D-glucosamine + NADPH + H(+). It participates in cell wall biogenesis; peptidoglycan biosynthesis. Its function is as follows. Cell wall formation. This Rhizobium etli (strain CIAT 652) protein is UDP-N-acetylenolpyruvoylglucosamine reductase.